Here is a 348-residue protein sequence, read N- to C-terminus: MSLYLNRIPAMSNHQVALQFEDGVTRFIRIAQGETLSDAAYRQQINIPMDCREGACGTCRAFCESGNYDMPEDNYIEDALTPEEAQQGYVLACQCRPTSDAVFQIQASSEVCKTKIHHFEGTLARVENLSDSTITFDIQLDDGQPDIHFLAGQYVNVTLPGTTETRSYSFSSQPGNRLTGFVVRNVPQGKMSEYLSVQAKAGDKMSFTGPFGSFYLRDVKRPVLMLAGGTGIAPFLSMLQVLEQKGSEHPVRLVFGVTQDCDLVALEQLDALQQKLPWFEYRTVVAHAESQHERKGYVTGHIEYDWLNGGEVDVYLCGPVPMVEAVRSWLDTQGIQPANFLFEKFSAN.

Residues 14 to 109 (HQVALQFEDG…DAVFQIQASS (96 aa)) form the 2Fe-2S ferredoxin-type domain. Positions 51, 56, 59, and 93 each coordinate [2Fe-2S] cluster. The tract at residues 111–348 (VCKTKIHHFE…NFLFEKFSAN (238 aa)) is ferredoxin-reductase. An FAD-binding FR-type domain is found at 116–217 (IHHFEGTLAR…TGPFGSFYLR (102 aa)).

This sequence belongs to the bacterial ring-hydroxylating dioxygenase ferredoxin reductase family. In terms of assembly, this dioxygenase system consists of three proteins: the two subunits of the hydroxylase component (BenA and BenB), and an electron transfer component (BenC). FAD is required as a cofactor. [2Fe-2S] cluster serves as cofactor.

It carries out the reaction 2 reduced [2Fe-2S]-[ferredoxin] + NAD(+) + H(+) = 2 oxidized [2Fe-2S]-[ferredoxin] + NADH. It participates in xenobiotic degradation; toluene degradation. Its function is as follows. Electron transfer component of benzoate 1,2-dioxygenase system. This is Benzoate 1,2-dioxygenase electron transfer component (benC) from Acinetobacter baylyi (strain ATCC 33305 / BD413 / ADP1).